The primary structure comprises 371 residues: DNA replication and repair protein RecF (371 aa).

30–37 provides a ligand contact to ATP; the sequence is GANAQGKT.

This sequence belongs to the RecF family.

Its subcellular location is the cytoplasm. In terms of biological role, the RecF protein is involved in DNA metabolism; it is required for DNA replication and normal SOS inducibility. RecF binds preferentially to single-stranded, linear DNA. It also seems to bind ATP. This Lacticaseibacillus casei (strain BL23) (Lactobacillus casei) protein is DNA replication and repair protein RecF.